The sequence spans 438 residues: Rhomboid-related protein 1 (438 aa).

Residues 1–62 form a disordered region; sequence MGRVEDGGTT…PSQPGPALWS (62 aa). Acidic residues predominate over residues 8–17; sequence GTTEELEDWD. A run of 7 helical transmembrane segments spans residues 196–216, 262–282, 284–304, 308–328, 340–359, 372–392, and 405–425; these read PPVFMASVTLAQIIVFLCYGA, GFNALLQLMIGVPLEMVHGLL, ISLLYLAGVLAGSLTVSITDM, VVGGSGGVYALCSAHLANVVM, LRMVLALVCMSSEVGRAVWL, PSFMAHLAGAVVGVSMGLTIL, and WWVVLLAYGTFLLFAVFWNVF. Ser312 acts as the Nucleophile in catalysis. Residue His377 is part of the active site.

It belongs to the peptidase S54 family. In terms of tissue distribution, detected in heart, brain, skeletal muscle and kidney.

It localises to the membrane. It carries out the reaction Cleaves type-1 transmembrane domains using a catalytic dyad composed of serine and histidine that are contributed by different transmembrane domains.. May be involved in regulated intramembrane proteolysis and the subsequent release of functional polypeptides from their membrane anchors. The polypeptide is Rhomboid-related protein 1 (RHBDL1) (Homo sapiens (Human)).